Here is a 566-residue protein sequence, read N- to C-terminus: Urease subunit alpha (566 aa).

The region spanning 128–566 (GGVDTHIHFI…LPMAQRYFLF (439 aa)) is the Urease domain. Residues histidine 133, histidine 135, and lysine 216 each contribute to the Ni(2+) site. Lysine 216 is modified (N6-carboxylysine). Histidine 218 lines the substrate pocket. The Ni(2+) site is built by histidine 245 and histidine 271. The Proton donor role is filled by histidine 319. Aspartate 359 serves as a coordination point for Ni(2+).

The protein belongs to the metallo-dependent hydrolases superfamily. Urease alpha subunit family. In terms of assembly, may form a heterohexamer of 3 UreC (alpha) and 3 UreAB (gamma/beta) subunits. May also form a heterotrimer of UreA (gamma), UreB (beta) and UreC (alpha) subunits. Three heterotrimers associate to form the active enzyme. Requires Ni cation as cofactor. Post-translationally, carboxylation allows a single lysine to coordinate two nickel ions.

The protein resides in the cytoplasm. It carries out the reaction urea + 2 H2O + H(+) = hydrogencarbonate + 2 NH4(+). It functions in the pathway nitrogen metabolism; urea degradation; CO(2) and NH(3) from urea (urease route): step 1/1. In Pseudomonas savastanoi pv. phaseolicola (strain 1448A / Race 6) (Pseudomonas syringae pv. phaseolicola (strain 1448A / Race 6)), this protein is Urease subunit alpha.